The primary structure comprises 147 residues: Cyanate hydratase (147 aa).

Catalysis depends on residues arginine 88, glutamate 91, and serine 114.

The protein belongs to the cyanase family.

It catalyses the reaction cyanate + hydrogencarbonate + 3 H(+) = NH4(+) + 2 CO2. In terms of biological role, catalyzes the reaction of cyanate with bicarbonate to produce ammonia and carbon dioxide. The sequence is that of Cyanate hydratase from Prochlorococcus marinus subsp. pastoris (strain CCMP1986 / NIES-2087 / MED4).